A 508-amino-acid chain; its full sequence is MGLPWYRVHTVVLNDPGRFISVHLMHTALVSGWAGSMALYELAIFDPSDVALNPMWPQGMFVLPFMTRLGVTKSWGAWSVTGESFSDPGIWSYEGVAVAHIILSGLLFLAAIWHWVYWDLDLFRDPASGELKLDLPRVFGVHLFLSGALCLAFGVFHVTGVFGPGIWVSDPYGLSGKIEPVIPSWGAEGFDPYNVGAIASHHIAAGLLGLIAGGFHVLVRPSQRLFVLLRMGNIETVLSSSIAAVFWSAFVVSGTMWYGSASTPIELFGPTRYQWDKGYFQEEIERRVQASLSDGCSLSEAWGAISPKLAFYDYIGNNPAKGGLFRSGPMNNGDGIATAWLGHAVFIDKEGNSLFVRRMPTFFETFPVILLDQNGVVRADIPFRRAESKYSIEQVGVTVRFFGGSFDTLSFNDPATVKRYARHAQLGEIFDFNRSILQSDGVFRSSPRGWFTFGHLSFALIFFFGHIWHGARTLFKYLLAGIDPHLEEEIEFGTFEKLGDDTTKKELV.

Helical transmembrane passes span S21–S36, I101–W115, G140–F156, I203–L218, V237–V252, and S457–R472.

The protein belongs to the PsbB/PsbC family. PsbB subfamily. In terms of assembly, PSII is composed of 1 copy each of membrane proteins PsbA, PsbB, PsbC, PsbD, PsbE, PsbF, PsbH, PsbI, PsbJ, PsbK, PsbL, PsbM, PsbT, PsbY, PsbZ, Psb30/Ycf12, at least 3 peripheral proteins of the oxygen-evolving complex and a large number of cofactors. It forms dimeric complexes. The cofactor is Binds multiple chlorophylls. PSII binds additional chlorophylls, carotenoids and specific lipids..

It localises to the plastid. It is found in the chloroplast thylakoid membrane. Functionally, one of the components of the core complex of photosystem II (PSII). It binds chlorophyll and helps catalyze the primary light-induced photochemical processes of PSII. PSII is a light-driven water:plastoquinone oxidoreductase, using light energy to abstract electrons from H(2)O, generating O(2) and a proton gradient subsequently used for ATP formation. The chain is Photosystem II CP47 reaction center protein from Euglena gracilis.